We begin with the raw amino-acid sequence, 609 residues long: UvrABC system protein C (609 aa).

The GIY-YIG domain maps to 16 to 94 (SSAGVYRMYD…IKQYMPKYNV (79 aa)). One can recognise a UVR domain in the interval 203–238 (QQVISALVDKMELAAERQAYEQAARFRDQIMALRKV).

It belongs to the UvrC family. Interacts with UvrB in an incision complex.

The protein resides in the cytoplasm. In terms of biological role, the UvrABC repair system catalyzes the recognition and processing of DNA lesions. UvrC both incises the 5' and 3' sides of the lesion. The N-terminal half is responsible for the 3' incision and the C-terminal half is responsible for the 5' incision. This is UvrABC system protein C from Shewanella baltica (strain OS155 / ATCC BAA-1091).